The following is a 317-amino-acid chain: F-box protein FBW2 (317 aa).

The F-box domain occupies 7–54; sequence FRHWDELIPDALGLIFSHLPLQEVLTVVPRVCKAWNRAVTGPYCWQEI.

As to quaternary structure, part of a SCF (SKP1-cullin-F-box) protein ligase complex. Interacts with CUL1, CUL2 and SPK1B/ASK2.

The protein resides in the nucleus. The protein operates within protein modification; protein ubiquitination. Component of SCF(ASK-cullin-F-box) E3 ubiquitin ligase complexes, which may mediate the ubiquitination and subsequent proteasomal degradation of target proteins. The polypeptide is F-box protein FBW2 (FBW2) (Arabidopsis thaliana (Mouse-ear cress)).